The following is a 69-amino-acid chain: UPF0346 protein YuiB (69 aa).

The protein belongs to the UPF0346 family.

The protein is UPF0346 protein YuiB (yuiB) of Lactococcus lactis subsp. lactis (strain IL1403) (Streptococcus lactis).